A 116-amino-acid polypeptide reads, in one-letter code: Protein Rev (116 aa).

Serine 5 is subject to Phosphoserine; by host CK2. Positions 18 to 26 (IIKILYQSN) are homomultimerization. Residues 26–48 (NPYSKPNGSRQARRNRRRRWRAR) form a disordered region. The Nuclear localization signal and RNA-binding (RRE) motif lies at 34 to 50 (SRQARRNRRRRWRARQN). Residues 36-47 (QARRNRRRRWRA) show a composition bias toward basic residues. The Nuclear export signal and binding to XPO1 signature appears at 73-84 (LQLPPIERLRLD). Serine 92 is subject to Phosphoserine; by host.

The protein belongs to the HIV-1 REV protein family. Homomultimer; when bound to the RRE. Multimeric assembly is essential for activity and may involve XPO1. Binds to human KPNB1, XPO1, TNPO1, RANBP5 and IPO7. Interacts with the viral Integrase. Interacts with human KHDRBS1. Interacts with human NAP1; this interaction decreases Rev multimerization and stimulates its activity. Interacts with human DEAD-box helicases DDX3 and DDX24; these interactions may serve for viral RNA export to the cytoplasm and packaging, respectively. Interacts with human PSIP1; this interaction may inhibit HIV-1 DNA integration by promoting dissociation of the Integrase-LEDGF/p75 complex. Post-translationally, asymmetrically arginine dimethylated at one site by host PRMT6. Methylation impairs the RNA-binding activity and export of viral RNA from the nucleus to the cytoplasm. In terms of processing, phosphorylated by protein kinase CK2. Presence of, and maybe binding to the N-terminus of the regulatory beta subunit of CK2 is necessary for CK2-mediated Rev's phosphorylation.

It localises to the host nucleus. The protein localises to the host nucleolus. Its subcellular location is the host cytoplasm. Escorts unspliced or incompletely spliced viral pre-mRNAs (late transcripts) out of the nucleus of infected cells. These pre-mRNAs carry a recognition sequence called Rev responsive element (RRE) located in the env gene, that is not present in fully spliced viral mRNAs (early transcripts). This function is essential since most viral proteins are translated from unspliced or partially spliced pre-mRNAs which cannot exit the nucleus by the pathway used by fully processed cellular mRNAs. Rev itself is translated from a fully spliced mRNA that readily exits the nucleus. Rev's nuclear localization signal (NLS) binds directly to KPNB1/Importin beta-1 without previous binding to KPNA1/Importin alpha-1. KPNB1 binds to the GDP bound form of RAN (Ran-GDP) and targets Rev to the nucleus. In the nucleus, the conversion from Ran-GDP to Ran-GTP dissociates Rev from KPNB1 and allows Rev's binding to the RRE in viral pre-mRNAs. Rev multimerization on the RRE via cooperative assembly exposes its nuclear export signal (NES) to the surface. Rev can then form a complex with XPO1/CRM1 and Ran-GTP, leading to nuclear export of the complex. Conversion from Ran-GTP to Ran-GDP mediates dissociation of the Rev/RRE/XPO1/RAN complex, so that Rev can return to the nucleus for a subsequent round of export. Beside KPNB1, also seems to interact with TNPO1/Transportin-1, RANBP5/IPO5 and IPO7/RANBP7 for nuclear import. The nucleoporin-like HRB/RIP is an essential cofactor that probably indirectly interacts with Rev to release HIV RNAs from the perinuclear region to the cytoplasm. This Homo sapiens (Human) protein is Protein Rev.